The primary structure comprises 284 residues: Tropomyosin alpha-1 chain (284 aa).

Residues 1-37 form a disordered region; it reads MDAIKKKMQMLKLDKENALDRAEQAETDKKAAEERSK. Residues 1 to 284 adopt a coiled-coil conformation; that stretch reads MDAIKKKMQM…DHALNDMTSI (284 aa). The segment covering 12 to 37 has biased composition (basic and acidic residues); it reads KLDKENALDRAEQAETDKKAAEERSK.

The protein belongs to the tropomyosin family. As to quaternary structure, homodimer. Heterodimer of an alpha (TPM1, TPM3 or TPM4) and a beta (TPM2) chain.

Its subcellular location is the cytoplasm. The protein resides in the cytoskeleton. Functionally, binds to actin filaments in muscle and non-muscle cells. Plays a central role, in association with the troponin complex, in the calcium dependent regulation of vertebrate striated muscle contraction. Smooth muscle contraction is regulated by interaction with caldesmon. In non-muscle cells is implicated in stabilizing cytoskeleton actin filaments. The chain is Tropomyosin alpha-1 chain (tpma) from Danio rerio (Zebrafish).